The sequence spans 335 residues: Glyceraldehyde-3-phosphate dehydrogenase 2 (335 aa).

NAD(+) contacts are provided by residues 13 to 14 (RI), aspartate 34, and methionine 79. Residues 151 to 153 (SCT), threonine 182, 211 to 212 (TG), and arginine 234 contribute to the D-glyceraldehyde 3-phosphate site. The Nucleophile role is filled by cysteine 152. Asparagine 316 provides a ligand contact to NAD(+).

It belongs to the glyceraldehyde-3-phosphate dehydrogenase family. As to quaternary structure, homotetramer.

The protein localises to the cytoplasm. It catalyses the reaction D-glyceraldehyde 3-phosphate + phosphate + NAD(+) = (2R)-3-phospho-glyceroyl phosphate + NADH + H(+). Its pathway is carbohydrate degradation; glycolysis; pyruvate from D-glyceraldehyde 3-phosphate: step 1/5. Glyceraldehyde-3-phosphate dehydrogenase is a key enzyme in glycolysis that catalyzes the first step of the pathway by converting D-glyceraldehyde 3-phosphate (G3P) into 3-phospho-D-glyceroyl phosphate. The polypeptide is Glyceraldehyde-3-phosphate dehydrogenase 2 (gapdh-2) (Danio rerio (Zebrafish)).